Consider the following 311-residue polypeptide: Probable manganese-dependent inorganic pyrophosphatase (311 aa).

The Mn(2+) site is built by His9, Asp13, Asp15, Asp75, His97, and Asp149.

This sequence belongs to the PPase class C family. Requires Mn(2+) as cofactor.

It is found in the cytoplasm. It catalyses the reaction diphosphate + H2O = 2 phosphate + H(+). The sequence is that of Probable manganese-dependent inorganic pyrophosphatase from Shouchella clausii (strain KSM-K16) (Alkalihalobacillus clausii).